The chain runs to 396 residues: 1-deoxy-D-xylulose 5-phosphate reductoisomerase (396 aa).

The NADPH site is built by threonine 10, glycine 11, serine 12, isoleucine 13, glycine 36, lysine 37, asparagine 38, and asparagine 124. Lysine 125 is a 1-deoxy-D-xylulose 5-phosphate binding site. NADPH is bound at residue glutamate 126. Aspartate 150 lines the Mn(2+) pocket. The 1-deoxy-D-xylulose 5-phosphate site is built by serine 151, glutamate 152, serine 186, and histidine 209. Residue glutamate 152 coordinates Mn(2+). Glycine 215 contacts NADPH. 1-deoxy-D-xylulose 5-phosphate is bound by residues serine 222, asparagine 227, lysine 228, and glutamate 231. Glutamate 231 contacts Mn(2+).

Belongs to the DXR family. Mg(2+) serves as cofactor. It depends on Mn(2+) as a cofactor.

The catalysed reaction is 2-C-methyl-D-erythritol 4-phosphate + NADP(+) = 1-deoxy-D-xylulose 5-phosphate + NADPH + H(+). It functions in the pathway isoprenoid biosynthesis; isopentenyl diphosphate biosynthesis via DXP pathway; isopentenyl diphosphate from 1-deoxy-D-xylulose 5-phosphate: step 1/6. Catalyzes the NADPH-dependent rearrangement and reduction of 1-deoxy-D-xylulose-5-phosphate (DXP) to 2-C-methyl-D-erythritol 4-phosphate (MEP). This chain is 1-deoxy-D-xylulose 5-phosphate reductoisomerase, found in Actinobacillus pleuropneumoniae serotype 3 (strain JL03).